We begin with the raw amino-acid sequence, 573 residues long: Putative cytochrome c oxidase subunit 1-beta (573 aa).

Residues 53-73 (VIGHLYLATSFGFFLLGGVLA) form a helical membrane-spanning segment. H100 contacts Fe(II)-heme a. 6 helical membrane-spanning segments follow: residues 103–123 (IMML…IMPL), 141–161 (WMYL…GGAA), 188–208 (GLVV…STII), 227–247 (ILFT…ALLM), 272–292 (LFWF…FGIV), and 304–324 (IFGY…SAVV). Residues H278 and Y282 each coordinate Cu cation. A cross-link (1'-histidyl-3'-tyrosine (His-Tyr)) is located at residues 278–282 (HPEVY). 2 residues coordinate Cu cation: H327 and H328. The next 2 membrane-spanning stretches (helical) occupy residues 329 to 349 (MFAT…LIAV) and 373 to 393 (MLWA…GVLI). Residue H411 participates in heme a3 binding. 3 helical membrane passes run 412–432 (LHYV…YFWW), 447–467 (IHFW…HWLG), and 490–510 (ISSI…YNVW). H413 provides a ligand contact to Fe(II)-heme a.

The protein belongs to the heme-copper respiratory oxidase family. Associates with subunits II, III and IV to form cytochrome c oxidase. Cu(2+) is required as a cofactor. Heme serves as cofactor.

It is found in the cell membrane. It carries out the reaction 4 Fe(II)-[cytochrome c] + O2 + 8 H(+)(in) = 4 Fe(III)-[cytochrome c] + 2 H2O + 4 H(+)(out). Its pathway is energy metabolism; oxidative phosphorylation. Functionally, cytochrome c oxidase is the component of the respiratory chain that catalyzes the reduction of oxygen to water. Subunits 1-3 form the functional core of the enzyme complex. CO I is the catalytic subunit of the enzyme. Electrons originating in cytochrome c are transferred via the copper A center of subunit 2 and heme A of subunit 1 to the bimetallic center formed by heme A3 and copper B. The chain is Putative cytochrome c oxidase subunit 1-beta (ctaD2) from Streptomyces coelicolor (strain ATCC BAA-471 / A3(2) / M145).